Consider the following 716-residue polypeptide: Myogenesis-regulating glycosidase (716 aa).

Residues 1–11 (MSQNLQETSQA) show a composition bias toward polar residues. Residues 1-26 (MSQNLQETSQAYPRHRPGSHAGPKSL) are disordered. At 1–55 (MSQNLQETSQAYPRHRPGSHAGPKSLKVTPRATMYTFLPDNFSPAKPKPTKELRP) the chain is on the cytoplasmic side. A helical; Signal-anchor for type II membrane protein transmembrane segment spans residues 56 to 76 (LLCSAVLGLLLVLAAVVAWCY). Topologically, residues 77–716 (YSASLRKAER…DEVAYFTWAS (640 aa)) are extracellular. N-linked (GlcNAc...) asparagine glycosylation is found at Asn239, Asn249, and Asn455. Active-site residues include Asp462 and Glu465. Residue Asp527 is the Proton donor of the active site.

It belongs to the glycosyl hydrolase 31 family. In terms of assembly, interacts with IGF2; this interaction is required for IGF2 secretion. In terms of tissue distribution, expressed in brain, liver, spleen, skeletal muscle, heart, lung and kidney. High expression is observed in the cerebellum, specifically in astrocytes. Highly expressed in skeletal muscle (at protein level).

The protein resides in the nucleus membrane. It is found in the endoplasmic reticulum membrane. Putative glycosidase. Promotes myogenesis by activating AKT signaling through the maturation and secretion of IGF2. This Mus musculus (Mouse) protein is Myogenesis-regulating glycosidase (Myorg).